The primary structure comprises 734 residues: Translation initiation factor IF-2 (734 aa).

A disordered region spans residues 39 to 110; the sequence is SKFAPRSSFT…TGKPETKKRE (72 aa). Positions 82-110 are enriched in basic and acidic residues; sequence DYEKRKLAEQRATRRLKGDTGKPETKKRE. The tr-type G domain maps to 238 to 405; that stretch reads NRPPIVTVMG…SIVLQAEILD (168 aa). The segment at 247–254 is G1; sequence GHVDHGKT. 247-254 serves as a coordination point for GTP; that stretch reads GHVDHGKT. A G2 region spans residues 272-276; it reads GITQH. The G3 stretch occupies residues 293-296; that stretch reads DTPG. GTP is bound by residues 293–297 and 347–350; these read DTPGH and NKCD. The G4 stretch occupies residues 347-350; that stretch reads NKCD. The tract at residues 383-385 is G5; that stretch reads SAK.

The protein belongs to the TRAFAC class translation factor GTPase superfamily. Classic translation factor GTPase family. IF-2 subfamily.

The protein localises to the cytoplasm. In terms of biological role, one of the essential components for the initiation of protein synthesis. Protects formylmethionyl-tRNA from spontaneous hydrolysis and promotes its binding to the 30S ribosomal subunits. Also involved in the hydrolysis of GTP during the formation of the 70S ribosomal complex. In Pelagibacter ubique (strain HTCC1062), this protein is Translation initiation factor IF-2.